A 418-amino-acid polypeptide reads, in one-letter code: Serine hydroxymethyltransferase (418 aa).

(6S)-5,6,7,8-tetrahydrofolate contacts are provided by residues Leu121 and 125-127; that span reads GHL. Lys230 is subject to N6-(pyridoxal phosphate)lysine. 355-357 serves as a coordination point for (6S)-5,6,7,8-tetrahydrofolate; the sequence is SPF.

It belongs to the SHMT family. As to quaternary structure, homodimer. Pyridoxal 5'-phosphate is required as a cofactor.

The protein resides in the cytoplasm. The catalysed reaction is (6R)-5,10-methylene-5,6,7,8-tetrahydrofolate + glycine + H2O = (6S)-5,6,7,8-tetrahydrofolate + L-serine. The protein operates within one-carbon metabolism; tetrahydrofolate interconversion. It functions in the pathway amino-acid biosynthesis; glycine biosynthesis; glycine from L-serine: step 1/1. Its function is as follows. Catalyzes the reversible interconversion of serine and glycine with tetrahydrofolate (THF) serving as the one-carbon carrier. This reaction serves as the major source of one-carbon groups required for the biosynthesis of purines, thymidylate, methionine, and other important biomolecules. Also exhibits THF-independent aldolase activity toward beta-hydroxyamino acids, producing glycine and aldehydes, via a retro-aldol mechanism. The sequence is that of Serine hydroxymethyltransferase from Streptococcus pyogenes serotype M1.